The chain runs to 215 residues: Transmembrane protein 267 (215 aa).

A run of 3 helical transmembrane segments spans residues 77–97, 114–134, and 178–198; these read FGEI…HFLL, FLHC…TMHF, and FWLY…VMYF.

The protein localises to the membrane. This is Transmembrane protein 267 (TMEM267) from Bos taurus (Bovine).